Consider the following 423-residue polypeptide: Citrate synthase-like protein clz17 (423 aa).

Residues histidine 357 and aspartate 413 contribute to the active site.

The protein belongs to the citrate synthase family.

The protein operates within secondary metabolite biosynthesis. Its function is as follows. Citrate synthase-like protein; part of the gene cluster that mediates the biosynthesis of squalestatin S1 (SQS1, also known as zaragozic acid A), a heavily oxidized fungal polyketide that offers potent cholesterol lowering activity by targeting squalene synthase (SS). SQS1 is composed of a 2,8-dioxobicyclic[3.2.1]octane-3,4,5-tricarboxyclic acid core that is connected to two lipophilic polyketide arms. These initial steps feature the priming of an unusual benzoic acid starter unit onto the highly reducing polyketide synthase clz14, followed by oxaloacetate extension and product release to generate a tricarboxylic acid containing product. The phenylalanine ammonia lyase (PAL) clz10 and the acyl-CoA ligase clz12 are involved in transforming phenylalanine into benzoyl-CoA. The citrate synthase-like protein clz17 is involved in connecting the C-alpha-carbons of the hexaketide chain and oxaloacetate to afford the tricarboxylic acid unit. The potential hydrolytic enzymes, clz11 and clz13, are in close proximity to pks2 and may participate in product release. On the other side, the tetraketide arm is synthesized by a the squalestatin tetraketide synthase clz2 and enzymatically esterified to the core in the last biosynthetic step, by the acetyltransferase clz6. The biosynthesis of the tetraketide must involve 3 rounds of chain extension. After the first and second rounds methyl-transfer occurs, and in all rounds of extension the ketoreductase and dehydratase are active. The enoyl reductase and C-MeT of clz2 are not active in the final round of extension. The acetyltransferase clz6 appears to have a broad substrate selectivity for its acyl CoA substrate, allowing the in vitro synthesis of novel squalestatins. The biosynthesis of SQS1 requires several oxidative steps likely performed by oxidoreductases clz3, clz15 and clz16. Finally, in support of the identification of the cluster as being responsible for SQS1 production, the cluster contains a gene encoding a putative squalene synthase (SS) clz20, suggesting a likely mechanism for self-resistance. The sequence is that of Citrate synthase-like protein clz17 from Cochliobolus lunatus (Filamentous fungus).